The sequence spans 247 residues: Triosephosphate isomerase (247 aa).

2 residues coordinate substrate: Asn-10 and Lys-12. His-94 (electrophile) is an active-site residue. The Proton acceptor role is filled by Glu-164.

The protein belongs to the triosephosphate isomerase family. In terms of assembly, homodimer.

It carries out the reaction D-glyceraldehyde 3-phosphate = dihydroxyacetone phosphate. It participates in carbohydrate biosynthesis; gluconeogenesis. The protein operates within carbohydrate degradation; glycolysis; D-glyceraldehyde 3-phosphate from glycerone phosphate: step 1/1. This chain is Triosephosphate isomerase (Tpi), found in Culex tarsalis (Encephalitis mosquito).